Reading from the N-terminus, the 458-residue chain is MTVIALAAGKGTRMKSPLPKVLHPVAGRPMIEKVIQASKQAGAAEVRVIVGHGQNLVRQVVEPMGVACYVQDEQLGTAHAVRCAKPETIEGVVVIMNGDHPLIEASDIKDFVRIFRDEKCDLAVVTAVLKNPGEFGRIVRHKGDLAAIVEAKDASAEALKIREINTGIYIVKASVLSEYLPQISNNNAKKEYYITDLIALCIQDKCRVQAIQSTPKVAVGVNNQLELARATRLLFKRKALRLMEDGVLMIDPRTVYVEESVEIGAGTVIYPNVFIRGRTKIGSFTVIESNAFISDCEIGDSVQIRGGSYLESSKLHNKVSAGPYARLRPETEIFEEAHVGNFVEMKKVKFGKKSKAGHLTYLGDAEIGEEVNVGCGTITCNYAADKKKYKTKIGNRVFVGSDTQFVAPIEVGDDAIIGSGSTITKNVPAKALAVARGKQFIKENYSAKTAETEEKEQV.

The segment at Met1–Gln224 is pyrophosphorylase. UDP-N-acetyl-alpha-D-glucosamine-binding positions include Leu6 to Gly9, Lys20, Gln71, and Gly76 to Thr77. Asp99 is a Mg(2+) binding site. The UDP-N-acetyl-alpha-D-glucosamine site is built by Gly136, Glu150, Asn165, and Asn222. Asn222 is a Mg(2+) binding site. The linker stretch occupies residues Leu225–Asp245. Positions Gly246–Val458 are N-acetyltransferase. UDP-N-acetyl-alpha-D-glucosamine is bound by residues Arg328 and Lys346. The active-site Proton acceptor is the His358. UDP-N-acetyl-alpha-D-glucosamine contacts are provided by Tyr361 and Asn372. Acetyl-CoA is bound by residues Asn381–Tyr382, Ser401, Ser419, and Arg436.

The protein in the N-terminal section; belongs to the N-acetylglucosamine-1-phosphate uridyltransferase family. In the C-terminal section; belongs to the transferase hexapeptide repeat family. As to quaternary structure, homotrimer. The cofactor is Mg(2+).

The protein localises to the cytoplasm. The enzyme catalyses alpha-D-glucosamine 1-phosphate + acetyl-CoA = N-acetyl-alpha-D-glucosamine 1-phosphate + CoA + H(+). It carries out the reaction N-acetyl-alpha-D-glucosamine 1-phosphate + UTP + H(+) = UDP-N-acetyl-alpha-D-glucosamine + diphosphate. It functions in the pathway nucleotide-sugar biosynthesis; UDP-N-acetyl-alpha-D-glucosamine biosynthesis; N-acetyl-alpha-D-glucosamine 1-phosphate from alpha-D-glucosamine 6-phosphate (route II): step 2/2. Its pathway is nucleotide-sugar biosynthesis; UDP-N-acetyl-alpha-D-glucosamine biosynthesis; UDP-N-acetyl-alpha-D-glucosamine from N-acetyl-alpha-D-glucosamine 1-phosphate: step 1/1. The protein operates within bacterial outer membrane biogenesis; LPS lipid A biosynthesis. Functionally, catalyzes the last two sequential reactions in the de novo biosynthetic pathway for UDP-N-acetylglucosamine (UDP-GlcNAc). The C-terminal domain catalyzes the transfer of acetyl group from acetyl coenzyme A to glucosamine-1-phosphate (GlcN-1-P) to produce N-acetylglucosamine-1-phosphate (GlcNAc-1-P), which is converted into UDP-GlcNAc by the transfer of uridine 5-monophosphate (from uridine 5-triphosphate), a reaction catalyzed by the N-terminal domain. The polypeptide is Bifunctional protein GlmU (Bdellovibrio bacteriovorus (strain ATCC 15356 / DSM 50701 / NCIMB 9529 / HD100)).